Consider the following 161-residue polypeptide: Transcription elongation factor GreA (161 aa).

Residues 46-71 are a coiled coil; it reads AEYTAAKEKQSFLHGKLQELENNLAL.

This sequence belongs to the GreA/GreB family.

Its function is as follows. Necessary for efficient RNA polymerase transcription elongation past template-encoded arresting sites. The arresting sites in DNA have the property of trapping a certain fraction of elongating RNA polymerases that pass through, resulting in locked ternary complexes. Cleavage of the nascent transcript by cleavage factors such as GreA or GreB allows the resumption of elongation from the new 3'terminus. GreA releases sequences of 2 to 3 nucleotides. This Syntrophus aciditrophicus (strain SB) protein is Transcription elongation factor GreA.